The chain runs to 595 residues: Parathyroid hormone/parathyroid hormone-related peptide receptor (595 aa).

The signal sequence occupies residues 1–28 (MGAVRIAPGLALLLCCPVLSSAYALVDA). The Extracellular portion of the chain corresponds to 29–188 (DDVMTKEEQI…REREVFDRLG (160 aa)). Intrachain disulfides connect cysteine 48–cysteine 117, cysteine 108–cysteine 148, and cysteine 131–cysteine 170. Positions 66–103 (DKGWASASTSGKPKKEKASGKLYPESEEDKEVPTGSRH) are disordered. Asparagine 151, asparagine 161, asparagine 166, and asparagine 176 each carry an N-linked (GlcNAc...) asparagine glycan. Residues 189-209 (MIYTVGYSVSLASLTVAVLIL) traverse the membrane as a helical segment. Over 210–223 (AYFRRLHCTRNYIH) the chain is Cytoplasmic. Residues 224–244 (MHLFLSFMLRAVSIFVKDAVL) traverse the membrane as a helical segment. The Extracellular segment spans residues 245–294 (YSGATLDEAERLTEEELRAIAQAPPPPTAAAGYAGCRVAVTFFLYFLATN). Residues 295-315 (YYWILVEGLYLHSLIFMAFFS) traverse the membrane as a helical segment. Residues 316–318 (EKK) lie on the Cytoplasmic side of the membrane. Residues 319–339 (YLWGFTVFGWGLPAVFVAVWV) traverse the membrane as a helical segment. Topologically, residues 340–360 (SVRATLANTGCWDLSSGNKKW) are extracellular. Residues 361–381 (IIQVPILASIVLNFILFINIV) traverse the membrane as a helical segment. The Cytoplasmic portion of the chain corresponds to 382-404 (RVLATKLRETNAGRCDTRQQYRK). Residues 405-425 (LLKSTLVLMPLFGVHYIVFMA) traverse the membrane as a helical segment. The Extracellular segment spans residues 426–439 (TPYTEVSGTLWQVQ). A helical transmembrane segment spans residues 440–460 (MHYEMLFNSFQGFFVAIIYCF). Residues 461 to 595 (CNGEVQAEIK…LLQEEWETVM (135 aa)) lie on the Cytoplasmic side of the membrane. The Important for interaction with G proteins motif lies at 473-476 (WSRW). Residues 528-595 (TTTATTNGHP…LLQEEWETVM (68 aa)) form a disordered region. The span at 547-559 (APTLPATPPATAA) shows a compositional bias: low complexity. Position 553 is a phosphothreonine (threonine 553).

The protein belongs to the G-protein coupled receptor 2 family. In terms of assembly, homodimer in the absence of bound ligand. Peptide hormone binding leads to dissociation of the homodimer. Post-translationally, N-glycosylated. In terms of tissue distribution, high levels in the kidney, with much lower levels in aorta, heart, lung, prostate, testis, and skeletal muscle.

Its subcellular location is the cell membrane. In terms of biological role, G-protein-coupled receptor for parathyroid hormone (PTH) and for parathyroid hormone-related peptide (PTHLH). Ligand binding causes a conformation change that triggers signaling via guanine nucleotide-binding proteins (G proteins) and modulates the activity of downstream effectors, such as adenylate cyclase (cAMP). PTH1R is coupled to G(s) G alpha proteins and mediates activation of adenylate cyclase activity. PTHLH dissociates from PTH1R more rapidly than PTH; as consequence, the cAMP response induced by PTHLH decays faster than the response induced by PTH. The chain is Parathyroid hormone/parathyroid hormone-related peptide receptor (PTH1R) from Canis lupus familiaris (Dog).